A 59-amino-acid polypeptide reads, in one-letter code: Large ribosomal subunit protein uL30 (59 aa).

The protein belongs to the universal ribosomal protein uL30 family. In terms of assembly, part of the 50S ribosomal subunit.

The sequence is that of Large ribosomal subunit protein uL30 from Rhodococcus jostii (strain RHA1).